We begin with the raw amino-acid sequence, 369 residues long: MPDVKTASHTVGTAEDRVDLKTMGRAGLKDFVAEHGAPRYRGDQLFNWVYGKGVSDFDRMSNLPKRMRRGLQRDATVEDIEIVEQQQAADRTVKALFELPSGREAETVLIPAIDERGEARRLTVCVSSEVGCAMGCEFCATGRMGFRENLTPGAIFDQVWHMNEVAQEHFGRPVTNIVFMGMGEPLLNYDAVLDSISILTDEDSLNLSAQKITVSTVGLARRIKDLADDQLRTNLAVSLHAPDNETRSRIMPVNEAEKTSLPALKEALQYYFDKTGRQITYEYCLFKGVNDSETDARNLADVTRWAPSKVNLLMYNPVEGLNFERTSEAQLDRFVQVLVQEGVTVTVRRSRGQDIDAACGQLANEGEDA.

Glu-106 serves as the catalytic Proton acceptor. Residues 118–354 enclose the Radical SAM core domain; it reads EARRLTVCVS…VTVRRSRGQD (237 aa). Cysteines 125 and 359 form a disulfide. [4Fe-4S] cluster-binding residues include Cys-132, Cys-136, and Cys-139. Residues 183-184, Ser-215, 238-240, and Asn-316 each bind S-adenosyl-L-methionine; these read GE and SLH. Cys-359 (S-methylcysteine intermediate) is an active-site residue.

This sequence belongs to the radical SAM superfamily. RlmN family. The cofactor is [4Fe-4S] cluster.

It localises to the cytoplasm. The enzyme catalyses adenosine(2503) in 23S rRNA + 2 reduced [2Fe-2S]-[ferredoxin] + 2 S-adenosyl-L-methionine = 2-methyladenosine(2503) in 23S rRNA + 5'-deoxyadenosine + L-methionine + 2 oxidized [2Fe-2S]-[ferredoxin] + S-adenosyl-L-homocysteine. It carries out the reaction adenosine(37) in tRNA + 2 reduced [2Fe-2S]-[ferredoxin] + 2 S-adenosyl-L-methionine = 2-methyladenosine(37) in tRNA + 5'-deoxyadenosine + L-methionine + 2 oxidized [2Fe-2S]-[ferredoxin] + S-adenosyl-L-homocysteine. Its function is as follows. Specifically methylates position 2 of adenine 2503 in 23S rRNA and position 2 of adenine 37 in tRNAs. The protein is Probable dual-specificity RNA methyltransferase RlmN of Salinibacter ruber (strain DSM 13855 / M31).